The primary structure comprises 335 residues: Glyceraldehyde-3-phosphate dehydrogenase (335 aa).

Residues 12 to 13, aspartate 36, arginine 80, and serine 122 each bind NAD(+); that span reads RI. Residues 152–154, threonine 183, arginine 198, 211–212, and arginine 234 contribute to the D-glyceraldehyde 3-phosphate site; these read SCT and TG. Cysteine 153 serves as the catalytic Nucleophile. An NAD(+)-binding site is contributed by asparagine 316.

It belongs to the glyceraldehyde-3-phosphate dehydrogenase family. As to quaternary structure, homotetramer.

It localises to the cytoplasm. It catalyses the reaction D-glyceraldehyde 3-phosphate + phosphate + NAD(+) = (2R)-3-phospho-glyceroyl phosphate + NADH + H(+). It functions in the pathway carbohydrate degradation; glycolysis; pyruvate from D-glyceraldehyde 3-phosphate: step 1/5. In terms of biological role, catalyzes the oxidative phosphorylation of glyceraldehyde 3-phosphate (G3P) to 1,3-bisphosphoglycerate (BPG) using the cofactor NAD. The first reaction step involves the formation of a hemiacetal intermediate between G3P and a cysteine residue, and this hemiacetal intermediate is then oxidized to a thioester, with concomitant reduction of NAD to NADH. The reduced NADH is then exchanged with the second NAD, and the thioester is attacked by a nucleophilic inorganic phosphate to produce BPG. The sequence is that of Glyceraldehyde-3-phosphate dehydrogenase (gap) from Xanthobacter flavus.